The primary structure comprises 696 residues: Mitosis initiation protein fs(1)Ya (696 aa).

3 disordered regions span residues 245-285 (NAST…RAWK), 336-379 (EHSS…YSTS), and 457-492 (IKFE…TPEI). Composition is skewed to low complexity over residues 270-281 (QQQQQQQQPLQQ) and 361-379 (SESS…YSTS). Residues 448–696 (TGAGINKKQI…REPIERMRRQ (249 aa)) are rich in charged AA. Thr478, Thr484, and Thr489 each carry phosphothreonine. 2 short sequence motifs (nuclear localization signal) span residues 512 to 520 (PKKDKPKEK) and 534 to 538 (QPRVR). Disordered stretches follow at residues 555–586 (DVGE…KLEA) and 603–696 (PASL…MRRQ). The segment covering 557-569 (GEPEVVDAEEEDE) has biased composition (acidic residues). Composition is skewed to basic and acidic residues over residues 607-624 (RGER…DKEN) and 685-696 (RPREPIERMRRQ).

The protein localises to the nucleus envelope. It is found in the nucleus. It localises to the nucleoplasm. The protein resides in the cytoplasm. Cell cycle-dependent nuclear envelope component required for embryonic mitosis. The polypeptide is Mitosis initiation protein fs(1)Ya (fs(1)Ya) (Drosophila melanogaster (Fruit fly)).